A 239-amino-acid polypeptide reads, in one-letter code: tRNA (guanine-N(1)-)-methyltransferase (239 aa).

Residues glycine 108 and 127–132 contribute to the S-adenosyl-L-methionine site; that span reads LGDYVL.

The protein belongs to the RNA methyltransferase TrmD family. Homodimer.

Its subcellular location is the cytoplasm. It catalyses the reaction guanosine(37) in tRNA + S-adenosyl-L-methionine = N(1)-methylguanosine(37) in tRNA + S-adenosyl-L-homocysteine + H(+). Its function is as follows. Specifically methylates guanosine-37 in various tRNAs. The chain is tRNA (guanine-N(1)-)-methyltransferase from Streptococcus pneumoniae serotype 19F (strain G54).